The following is a 370-amino-acid chain: DNA replication and repair protein RecF (370 aa).

Position 30 to 37 (30 to 37) interacts with ATP; the sequence is GENAQGKT.

The protein belongs to the RecF family.

The protein resides in the cytoplasm. Functionally, the RecF protein is involved in DNA metabolism; it is required for DNA replication and normal SOS inducibility. RecF binds preferentially to single-stranded, linear DNA. It also seems to bind ATP. The polypeptide is DNA replication and repair protein RecF (Staphylococcus aureus (strain USA300)).